Consider the following 139-residue polypeptide: Low molecular weight protein-tyrosine-phosphatase PtpB (139 aa).

Cys7 acts as the Nucleophile in catalysis. The active site involves Arg13. Asp111 (proton donor) is an active-site residue.

Belongs to the low molecular weight phosphotyrosine protein phosphatase family.

It catalyses the reaction O-phospho-L-tyrosyl-[protein] + H2O = L-tyrosyl-[protein] + phosphate. With respect to regulation, inhibited by N-ethylmaleimide and sodium orthovanadate. Functionally, dephosphorylates the phosphotyrosine-containing proteins. The chain is Low molecular weight protein-tyrosine-phosphatase PtpB (ptpB) from Staphylococcus aureus.